The primary structure comprises 2144 residues: Polyketide synthase-like protein Preu9 (2144 aa).

The Ketosynthase family 3 (KS3) domain occupies 1–250; sequence MYALHLAVNA…GANAHCIIDH (250 aa). A disordered region spans residues 276-325; sequence QNGHLNEFAANGTTNAPSRDHRNGITDGRADGNTNGHPNANGDVGGNPIN. Over residues 293-305 the composition is skewed to basic and acidic residues; the sequence is SRDHRNGITDGRA. The tract at residues 435-738 is malonyl-CoA:ACP transacylase (MAT); sequence FVFTGQGAQW…KSPVEQILKS (304 aa). Residues 827 to 965 form an N-terminal hotdog fold region; that stretch reads HDLLGSKVVG…GCVKLIIKSS (139 aa). A dehydratase (DH) domain region spans residues 827 to 1137; that stretch reads HDLLGSKVVG…ERLRCVSYSR (311 aa). Positions 827 to 1141 constitute a PKS/mFAS DH domain; that stretch reads HDLLGSKVVG…CVSYSRISSD (315 aa). His-859 serves as the catalytic Proton acceptor; for dehydratase activity. A C-terminal hotdog fold region spans residues 979-1141; that stretch reads TLRPVDVRAW…CVSYSRISSD (163 aa). Asp-1050 functions as the Proton donor; for dehydratase activity in the catalytic mechanism. The tract at residues 1305-1494 is methyltransferase (MT) domain; that stretch reads TGIYPQLHRI…GLDVVLDDFP (190 aa). An enoyl reductase (ER) domain region spans residues 1731–2042; it reads GVPNSLCFAS…LANMIGKLVV (312 aa).

Its function is as follows. Polyketide synthase-like protein that lacks important domains such as carrier domain and does probably not function as a polyketide synthase. The sequence is that of Polyketide synthase-like protein Preu9 from Preussia isomera (Coprophilous fungus).